Consider the following 345-residue polypeptide: Trans-3-hydroxy-L-proline dehydratase (345 aa).

The Proton acceptor role is filled by Ser-90. Residues 91 to 92, Asp-252, and 257 to 258 each bind substrate; these read GS and GT.

Belongs to the proline racemase family.

The enzyme catalyses trans-3-hydroxy-L-proline = 1-pyrroline-2-carboxylate + H2O. Catalyzes the dehydration of trans-3-hydroxy-L-proline (t3LHyp) to Delta(1)-pyrroline-2-carboxylate (Pyr2C). May be involved in a degradation pathway that converts t3LHyp to L-proline, which would allow S.novella to grow on t3LHyp as a sole carbon source. This chain is Trans-3-hydroxy-L-proline dehydratase, found in Ancylobacter novellus (strain ATCC 8093 / DSM 506 / JCM 20403 / CCM 1077 / IAM 12100 / NBRC 12443 / NCIMB 10456) (Starkeya novella).